Reading from the N-terminus, the 317-residue chain is Glutaminase (317 aa).

Residues S67, N118, E162, N169, Y193, Y245, and V263 each coordinate substrate.

The protein belongs to the glutaminase family. Homotetramer.

The catalysed reaction is L-glutamine + H2O = L-glutamate + NH4(+). This chain is Glutaminase, found in Brucella canis (strain ATCC 23365 / NCTC 10854 / RM-666).